Consider the following 281-residue polypeptide: MRSEMLTALLTLAVLLQVAGSLKIAAFNIRSFGETKMSNATLTSYIVRILQRYDIALIQEVRDSHLTAVGKLLDKLNEKAADTYRFVASEPLGRRTYKERYLFVYRPDQVSVLDSYYYDDGCEPCGTDTFSREPAVVRFSSPSTKVREFAIVPLHSAPEDAVAEIDALYDVYLDVQKKWGLQDVMLMGDFNADYSYVTSSQWSSIRLRTNPAFKWLIPDTADTTATSTNCAYDRIVVAGPLLQDAVVPNSAAPFNFQAAYGLSNQLAQAISDHYPVEVTLA.

The signal sequence occupies residues 1-21 (MRSEMLTALLTLAVLLQVAGS). An N-linked (GlcNAc...) asparagine glycan is attached at Asn39. Glu99 is a catalytic residue. An intrachain disulfide couples Cys122 to Cys125. The active site involves His155.

It belongs to the DNase I family. It depends on Ca(2+) as a cofactor. Requires Mg(2+) as cofactor. Equivalent levels in pancreas and parotid gland, low amounts in kidney, liver, small intestine, stomach and thymus.

The protein resides in the secreted. Its subcellular location is the zymogen granule. The protein localises to the nucleus envelope. The enzyme catalyses Endonucleolytic cleavage to 5'-phosphodinucleotide and 5'-phosphooligonucleotide end-products.. Its function is as follows. Serum endocuclease secreted into body fluids by a wide variety of exocrine and endocrine organs. Expressed by non-hematopoietic tissues and preferentially cleaves protein-free DNA. Among other functions, seems to be involved in cell death by apoptosis. Binds specifically to G-actin and blocks actin polymerization. Preferentially attacks double-stranded DNA and produces oligonucleotides with 5'-phospho and 3'-hydroxy termini. Together with DNASE1L3, plays a key role in degrading neutrophil extracellular traps (NETs). NETs are mainly composed of DNA fibers and are released by neutrophils to bind pathogens during inflammation. Degradation of intravascular NETs by DNASE1 and DNASE1L3 is required to prevent formation of clots that obstruct blood vessels and cause organ damage following inflammation. This is Deoxyribonuclease-1 (DNASE1) from Oryctolagus cuniculus (Rabbit).